The chain runs to 534 residues: Corneodesmosin (534 aa).

A signal peptide spans M1–A32. 2 disordered regions span residues F38–S252 and C396–G497. Composition is skewed to low complexity over residues G64–S82, G107–A185, S200–P236, S397–S415, and P431–G446. Over residues G454–L472 the composition is skewed to polar residues.

It is found in the secreted. In terms of biological role, important for the epidermal barrier integrity. The protein is Corneodesmosin (CDSN) of Macaca mulatta (Rhesus macaque).